The chain runs to 230 residues: Phosphoglycerate mutase-like protein 4 (230 aa).

His-21 (tele-phosphohistidine intermediate) is an active-site residue. Glu-96 serves as the catalytic Proton donor/acceptor.

The protein belongs to the phosphoglycerate mutase family.

Functionally, may play a role in carbohydrates metabolism. This Arabidopsis thaliana (Mouse-ear cress) protein is Phosphoglycerate mutase-like protein 4.